Consider the following 498-residue polypeptide: Glutamate--tRNA ligase (498 aa).

A 'HIGH' region motif is present at residues 11-21 (PSPTGHLHIGN). A 'KMSKS' region motif is present at residues 260 to 264 (KLSKR). Position 263 (Lys263) interacts with ATP.

Belongs to the class-I aminoacyl-tRNA synthetase family. Glutamate--tRNA ligase type 1 subfamily. In terms of assembly, monomer.

It is found in the cytoplasm. It carries out the reaction tRNA(Glu) + L-glutamate + ATP = L-glutamyl-tRNA(Glu) + AMP + diphosphate. Its function is as follows. Catalyzes the attachment of glutamate to tRNA(Glu) in a two-step reaction: glutamate is first activated by ATP to form Glu-AMP and then transferred to the acceptor end of tRNA(Glu). This is Glutamate--tRNA ligase from Leuconostoc citreum (strain KM20).